The sequence spans 479 residues: Aspartyl/glutamyl-tRNA(Asn/Gln) amidotransferase subunit B (479 aa).

It belongs to the GatB/GatE family. GatB subfamily. As to quaternary structure, heterotrimer of A, B and C subunits.

It catalyses the reaction L-glutamyl-tRNA(Gln) + L-glutamine + ATP + H2O = L-glutaminyl-tRNA(Gln) + L-glutamate + ADP + phosphate + H(+). The catalysed reaction is L-aspartyl-tRNA(Asn) + L-glutamine + ATP + H2O = L-asparaginyl-tRNA(Asn) + L-glutamate + ADP + phosphate + 2 H(+). Allows the formation of correctly charged Asn-tRNA(Asn) or Gln-tRNA(Gln) through the transamidation of misacylated Asp-tRNA(Asn) or Glu-tRNA(Gln) in organisms which lack either or both of asparaginyl-tRNA or glutaminyl-tRNA synthetases. The reaction takes place in the presence of glutamine and ATP through an activated phospho-Asp-tRNA(Asn) or phospho-Glu-tRNA(Gln). The chain is Aspartyl/glutamyl-tRNA(Asn/Gln) amidotransferase subunit B from Geobacter sp. (strain M21).